Consider the following 310-residue polypeptide: CCR4-NOT transcription complex subunit 7 (310 aa).

The a divalent metal cation site is built by aspartate 51, glutamate 53, aspartate 172, and aspartate 245.

It belongs to the CAF1 family. As to quaternary structure, component of the CCR4-NOT complex at least composed of ccf-1, ccr-4 and let-711, which is required for germ cell development in hermaphrodites. Within the complex interacts with let-711. As to expression, highly expressed in the germline. In particular, highly expressed in germ cells that enter meiosis and progress through the pachytene stage.

It localises to the nucleus. Its subcellular location is the cytoplasm. It catalyses the reaction Exonucleolytic cleavage of poly(A) to 5'-AMP.. In terms of biological role, catalytic component of the CCR4-NOT complex which is one of the major cellular mRNA deadenylases and is linked to various cellular processes including bulk mRNA degradation, miRNA-mediated repression, translational repression during translational initiation and general transcription regulation. Within the complex, plays a role in miRNA-mediated deadenylation in embryos. Within the complex promotes germ cell development and fertility in hermaphrodites. Additional complex functions may be a consequence of its influence on mRNA expression. The polypeptide is CCR4-NOT transcription complex subunit 7 (Caenorhabditis elegans).